A 341-amino-acid chain; its full sequence is S-adenosylmethionine:tRNA ribosyltransferase-isomerase (341 aa).

This sequence belongs to the QueA family. In terms of assembly, monomer.

It is found in the cytoplasm. It catalyses the reaction 7-aminomethyl-7-carbaguanosine(34) in tRNA + S-adenosyl-L-methionine = epoxyqueuosine(34) in tRNA + adenine + L-methionine + 2 H(+). The protein operates within tRNA modification; tRNA-queuosine biosynthesis. Transfers and isomerizes the ribose moiety from AdoMet to the 7-aminomethyl group of 7-deazaguanine (preQ1-tRNA) to give epoxyqueuosine (oQ-tRNA). The sequence is that of S-adenosylmethionine:tRNA ribosyltransferase-isomerase from Trichlorobacter lovleyi (strain ATCC BAA-1151 / DSM 17278 / SZ) (Geobacter lovleyi).